The chain runs to 213 residues: Nicotinate-nucleotide adenylyltransferase (213 aa).

This sequence belongs to the NadD family.

The enzyme catalyses nicotinate beta-D-ribonucleotide + ATP + H(+) = deamido-NAD(+) + diphosphate. Its pathway is cofactor biosynthesis; NAD(+) biosynthesis; deamido-NAD(+) from nicotinate D-ribonucleotide: step 1/1. Functionally, catalyzes the reversible adenylation of nicotinate mononucleotide (NaMN) to nicotinic acid adenine dinucleotide (NaAD). This is Nicotinate-nucleotide adenylyltransferase from Salmonella typhi.